The following is a 310-amino-acid chain: UDP-N-acetylenolpyruvoylglucosamine reductase (310 aa).

Residues 23–188 (KVGGNAEIFF…LKAVFKVNKG (166 aa)) enclose the FAD-binding PCMH-type domain. The active site involves Arg168. Ser217 (proton donor) is an active-site residue. Residue Glu287 is part of the active site.

The protein belongs to the MurB family. It depends on FAD as a cofactor.

Its subcellular location is the cytoplasm. The enzyme catalyses UDP-N-acetyl-alpha-D-muramate + NADP(+) = UDP-N-acetyl-3-O-(1-carboxyvinyl)-alpha-D-glucosamine + NADPH + H(+). It functions in the pathway cell wall biogenesis; peptidoglycan biosynthesis. In terms of biological role, cell wall formation. This is UDP-N-acetylenolpyruvoylglucosamine reductase from Rickettsia bellii (strain OSU 85-389).